The primary structure comprises 98 residues: Cystatin-B (98 aa).

An N-acetylmethionine modification is found at Met1. Positions 46-50 (QVVAG) match the Secondary area of contact motif.

It belongs to the cystatin family.

The protein resides in the cytoplasm. This is an intracellular thiol proteinase inhibitor. In Sus scrofa (Pig), this protein is Cystatin-B (CSTB).